The primary structure comprises 182 residues: tRNA-splicing endonuclease (182 aa).

Residues tyrosine 119, histidine 127, and lysine 158 contribute to the active site.

The protein belongs to the tRNA-intron endonuclease family. Archaeal short subfamily. Homotetramer; although the tetramer contains four active sites, only two participate in the cleavage. Therefore, it should be considered as a dimer of dimers.

It carries out the reaction pretRNA = a 3'-half-tRNA molecule with a 5'-OH end + a 5'-half-tRNA molecule with a 2',3'-cyclic phosphate end + an intron with a 2',3'-cyclic phosphate and a 5'-hydroxyl terminus.. In terms of biological role, endonuclease that removes tRNA introns. Cleaves pre-tRNA at the 5'- and 3'-splice sites to release the intron. The products are an intron and two tRNA half-molecules bearing 2',3' cyclic phosphate and 5'-OH termini. Recognizes a pseudosymmetric substrate in which 2 bulged loops of 3 bases are separated by a stem of 4 bp. This Saccharolobus islandicus (strain L.S.2.15 / Lassen #1) (Sulfolobus islandicus) protein is tRNA-splicing endonuclease.